The following is a 184-amino-acid chain: Probable S-adenosyl-L-methionine-binding protein PYRAB06630 (184 aa).

The 132-residue stretch at Y9 to N140 folds into the TsaA-like domain. Residues P26–Q28, H65–R66, R89, and L120–T123 contribute to the S-adenosyl-L-methionine site.

Belongs to the tRNA methyltransferase O family.

The sequence is that of Probable S-adenosyl-L-methionine-binding protein PYRAB06630 from Pyrococcus abyssi (strain GE5 / Orsay).